A 126-amino-acid chain; its full sequence is Small ribosomal subunit protein bS16 (126 aa).

The disordered stretch occupies residues 87–126 (ARSNPEKALPGKRALERVAEKKQKAEDAAAAAAAEASAAE). The segment covering 99-113 (RALERVAEKKQKAED) has biased composition (basic and acidic residues). Low complexity predominate over residues 114–126 (AAAAAAAEASAAE).

It belongs to the bacterial ribosomal protein bS16 family.

This Agrobacterium fabrum (strain C58 / ATCC 33970) (Agrobacterium tumefaciens (strain C58)) protein is Small ribosomal subunit protein bS16.